Here is a 282-residue protein sequence, read N- to C-terminus: Trihydroxynaphthalene reductase (282 aa).

I41, N114, and R147 together coordinate NADP(+). Residues S164 and Y178 each act as proton donor in the active site. Residues Y178, K182, I211, and T213 each coordinate NADP(+). The active-site Lowers pKa of active site Tyr is K182.

The protein belongs to the short-chain dehydrogenases/reductases (SDR) family. In terms of assembly, homotetramer.

It participates in pigment biosynthesis; melanin biosynthesis. Its function is as follows. Catalyzes the NADPH-dependent reduction of 1,3,8-trihydroxynaphthalene (T3HN) into (-)-vermelone. Essential for appressorial penetration of colletotrichum lagenarium. The protein is Trihydroxynaphthalene reductase (THR1) of Colletotrichum orbiculare (strain 104-T / ATCC 96160 / CBS 514.97 / LARS 414 / MAFF 240422) (Cucumber anthracnose fungus).